Here is a 510-residue protein sequence, read N- to C-terminus: MIWHVQNEVFILDSTRIFMKAFHLLLFNGSFILPECILIFGLILLLMIDSTSDQKDRPWFYFISSTSLVMSITALLFRWREEPMISFSGNFQTNNFNEIFQFLILLCSTLCIPLSVEYIECTEMAITEFLLFILTATLGGMFLCGANDLITIFVALECFSLCSYLLSGYTKRDVRSNEATTKYLLMGGASSSILVHGFSWLYGLSGGEIELQEIVNGLINTQMYNSPGISIALIFITVGIGFKLSLAPFHQWTPDVYEGSPTPVVAFLSVTSKVAASALATRIFDIPFYFSSNEWHLLLEILAILSMILGNLIAITQTSMKRMLAYSSIGQIGYVIIGIIVGDSNDGYASMITYMLFYIAMNLGTFARIVLFGLRTGTDNIRDYAGLYTKDPFLALSLALCLLSLGGLPPLAGFFGKLHLFWCGWQAGLYFLVSIGLLTSVVSIYYYLKIIKLLMTGRNQEITPHVRNYRKSPLRSNNSIELSMTVCVIASTIPGISMNPILAIAQDTLF.

13 helical membrane passes run 24–44 (LLLF…GLIL), 59–79 (WFYF…LFRW), 99–119 (IFQF…VEYI), 124–144 (MAIT…MFLC), 149–169 (LITI…LSGY), 184–204 (LLMG…LYGL), 229–249 (ISIA…LAPF), 262–284 (TPVV…TRIF), 295–315 (WHLL…LIAI), 323–343 (MLAY…IVGD), 354–374 (YMLF…LFGL), 395–415 (ALSL…AGFF), and 418–438 (LHLF…IGLL).

Belongs to the complex I subunit 2 family. NDH is composed of at least 16 different subunits, 5 of which are encoded in the nucleus.

It is found in the plastid. The protein localises to the chloroplast thylakoid membrane. It catalyses the reaction a plastoquinone + NADH + (n+1) H(+)(in) = a plastoquinol + NAD(+) + n H(+)(out). The catalysed reaction is a plastoquinone + NADPH + (n+1) H(+)(in) = a plastoquinol + NADP(+) + n H(+)(out). Functionally, NDH shuttles electrons from NAD(P)H:plastoquinone, via FMN and iron-sulfur (Fe-S) centers, to quinones in the photosynthetic chain and possibly in a chloroplast respiratory chain. The immediate electron acceptor for the enzyme in this species is believed to be plastoquinone. Couples the redox reaction to proton translocation, and thus conserves the redox energy in a proton gradient. The sequence is that of NAD(P)H-quinone oxidoreductase subunit 2 B, chloroplastic from Lemna minor (Common duckweed).